The following is a 157-amino-acid chain: UPF0251 protein CLM_1546 (157 aa).

This sequence belongs to the UPF0251 family.

The protein is UPF0251 protein CLM_1546 of Clostridium botulinum (strain Kyoto / Type A2).